A 549-amino-acid chain; its full sequence is NAC domain-containing protein 53 (549 aa).

The NAC domain maps to 9–159 (LAPGFRFHPT…AFVLCRIFQK (151 aa)). Residues 108-165 (VGMKKTLVYHKGRAPRGERTNWVMHEYRLVDQDLDKTGVHQDAFVLCRIFQKSGSGPK) mediate DNA binding. Positions 395–416 (LEKEETSRSKHVVEEKEKDEAS) are enriched in basic and acidic residues. The tract at residues 395–418 (LEKEETSRSKHVVEEKEKDEASCS) is disordered. The helical transmembrane segment at 526 to 546 (LIFMCFWVLLLSVSFKVSILV) threads the bilayer.

In terms of tissue distribution, expressed in roots, rosette leaves, cauline leaves, shoot apex and stems.

The protein localises to the endoplasmic reticulum membrane. The protein resides in the nucleus. Transcriptional activator activated by proteolytic cleavage through regulated intramembrane proteolysis (RIP). Promotes reactive oxygen species (ROS) production during drought-induced leaf senescence. In response to abscisic acid (ABA)-mediated drought stress signals, binds directly to the promoters of RBOHC and RBOHE genes, encoding ROS biosynthetic enzymes, resulting in ROS accumulation and triggering leaf senescence via programmed cell death (PCD). ROS-induced leaf senescence sustains plant survival under drought conditions. Involved in heat stress response. Modulates PCD through a ROS-mediated positive feedback control under heat stress conditions. This may provide an adaptation strategy for plant survival under extreme heat stress conditions. Acts as a repressor in preventing anther dehiscence during stamen development by suppressing genes that participate in jasmonic acid (JA) biosynthesis, such as DAD1, AOS, AOC3, OPR3 and 4CLL5/OPCL1. In Arabidopsis thaliana (Mouse-ear cress), this protein is NAC domain-containing protein 53.